The chain runs to 151 residues: ALK and LTK ligand 2 (151 aa).

The N-terminal stretch at 1 to 25 (MRVSGRPMLLALLLLLSTVGDRGRA) is a signal peptide. 2 disulfides stabilise this stretch: cysteine 112–cysteine 148 and cysteine 126–cysteine 135.

It belongs to the ALKAL family. Homodimer.

Its subcellular location is the secreted. It is found in the cell membrane. Its function is as follows. Cytokine that acts as a physiological ligand for receptor tyrosine kinases LTK and ALK, leading to their activation. Cytokine-binding is sufficient to activate LTK. In contrast, ALKAL2-driven activation of ALK is coupled with heparin-binding to ALK. Stimulation of ALK signaling is involved in neural development and regulation of energy expenditure. The protein is ALK and LTK ligand 2 of Mus musculus (Mouse).